A 425-amino-acid chain; its full sequence is Serine hydroxymethyltransferase (425 aa).

(6S)-5,6,7,8-tetrahydrofolate-binding positions include leucine 128 and 132 to 134 (GHL). Lysine 237 carries the post-translational modification N6-(pyridoxal phosphate)lysine.

The protein belongs to the SHMT family. Homodimer. Requires pyridoxal 5'-phosphate as cofactor.

The protein localises to the cytoplasm. The catalysed reaction is (6R)-5,10-methylene-5,6,7,8-tetrahydrofolate + glycine + H2O = (6S)-5,6,7,8-tetrahydrofolate + L-serine. The protein operates within one-carbon metabolism; tetrahydrofolate interconversion. Its pathway is amino-acid biosynthesis; glycine biosynthesis; glycine from L-serine: step 1/1. Its function is as follows. Catalyzes the reversible interconversion of serine and glycine with tetrahydrofolate (THF) serving as the one-carbon carrier. This reaction serves as the major source of one-carbon groups required for the biosynthesis of purines, thymidylate, methionine, and other important biomolecules. Also exhibits THF-independent aldolase activity toward beta-hydroxyamino acids, producing glycine and aldehydes, via a retro-aldol mechanism. This Wolbachia sp. subsp. Drosophila simulans (strain wRi) protein is Serine hydroxymethyltransferase.